Here is a 417-residue protein sequence, read N- to C-terminus: Hydrogen cyanide synthase subunit HcnC (417 aa).

The N-terminal stretch at 1-18 (MNRTYDIVIAGGGVIGAS) is a signal peptide. 7–21 (IVIAGGGVIGASCAY) provides a ligand contact to FAD. C19 is lipidated: N-palmitoyl cysteine. C19 carries the S-diacylglycerol cysteine lipid modification. Residues 46 to 66 (SAGGLWAIGESVGLGCGVIFF) traverse the membrane as a helical segment.

The protein belongs to the FAD-dependent glycerol-3-phosphate dehydrogenase family. In terms of assembly, heterotrimer of HcnA, HcnB and HcnC. FAD serves as cofactor.

The protein resides in the cell membrane. The catalysed reaction is glycine + 2 A = hydrogen cyanide + 2 AH2 + CO2. With respect to regulation, oxygen is necessary for cyanogenesis. Activated by succinate, glycine methyl ester, glucose and D,L-methionine in addition to glycine. Phenazine methosulfate, methylene blue, 2,6-dichlorophenolindophenol (DCIP) and ferricyanide can replace oxygen for the reaction. Inhibited by pyrrolnitrin and acriflavine at 1 mM concentration. In terms of biological role, a three-component membrane-bound flavoenzyme that catalyzes the formation of hydrogen cyanide, a secondary metabolite, by transfer of electrons to a cyanide-resistant branch of the aerobic respiratory chain. This Pseudomonas aeruginosa (strain ATCC 15692 / DSM 22644 / CIP 104116 / JCM 14847 / LMG 12228 / 1C / PRS 101 / PAO1) protein is Hydrogen cyanide synthase subunit HcnC.